Here is a 211-residue protein sequence, read N- to C-terminus: Peptidyl-prolyl cis-trans isomerase-like 3 (211 aa).

Positions 1-204 constitute a PPIase cyclophilin-type domain; it reads MSVTLHTTHG…ETLRINRVTI (204 aa).

The protein belongs to the cyclophilin-type PPIase family. PPIL3 subfamily.

It carries out the reaction [protein]-peptidylproline (omega=180) = [protein]-peptidylproline (omega=0). Functionally, PPIases accelerate the folding of proteins. It catalyzes the cis-trans isomerization of proline imidic peptide bonds in oligopeptides. This chain is Peptidyl-prolyl cis-trans isomerase-like 3 (cyp10), found in Emericella nidulans (strain FGSC A4 / ATCC 38163 / CBS 112.46 / NRRL 194 / M139) (Aspergillus nidulans).